A 155-amino-acid chain; its full sequence is Ribonuclease 8 (155 aa).

An N-terminal signal peptide occupies residues 1 to 28 (MAPARAGCCPLLLLLLLGLWVAEIPVSA). 3 disulfide bridges follow: Cys-65–Cys-119, Cys-83–Cys-134, and Cys-90–Cys-97. Residues 66 to 70 (KDLNT) and Lys-91 each bind substrate. The active-site Proton donor is His-150.

Belongs to the pancreatic ribonuclease family.

Its subcellular location is the secreted. Has a low ribonuclease activity. The chain is Ribonuclease 8 (RNASE8) from Saguinus oedipus (Cotton-top tamarin).